Reading from the N-terminus, the 261-residue chain is Cytochrome c oxidase subunit 3 (261 aa).

Over 1 to 15 (MAHQAHSYHMVDPSP) the chain is Mitochondrial matrix. Residues 16-34 (WPIFGAITALLTTSGLIMW) form a helical membrane-spanning segment. At 35 to 40 (FHYNSI) the chain is on the mitochondrial intermembrane side. Residues 41 to 66 (ALLTAGLLSMLLVMIQWWRDVVREST) form a helical membrane-spanning segment. Residues 67-72 (FQGHHT) lie on the Mitochondrial matrix side of the membrane. A helical transmembrane segment spans residues 73–105 (PTVQKGLRYGMILFITSEAFFFLGFFWAFFHSS). Residues 106-128 (LAPTPELGGQWPPTGIKPLNPLE) are Mitochondrial intermembrane-facing. The chain crosses the membrane as a helical span at residues 129–152 (VPLLNTAILLASGVTVTWAHHSIT). Over 153-155 (EGN) the chain is Mitochondrial matrix. Residues 156–183 (RKQAIHALTLTILLGFYFTALQAMEYHE) form a helical membrane-spanning segment. Residues 184-190 (ASFSIAD) are Mitochondrial intermembrane-facing. Residues 191–223 (SVYGSTFFVATGFHGLHVIIGSSFLTICLLRLI) traverse the membrane as a helical segment. Over 224-232 (KFHFTSNHH) the chain is Mitochondrial matrix. A helical transmembrane segment spans residues 233-256 (FGFEAAAWYWHFVDIIWLFLYMSM). Over 257–261 (YWWGS) the chain is Mitochondrial intermembrane.

The protein belongs to the cytochrome c oxidase subunit 3 family. As to quaternary structure, component of the cytochrome c oxidase (complex IV, CIV), a multisubunit enzyme composed of 14 subunits. The complex is composed of a catalytic core of 3 subunits MT-CO1, MT-CO2 and MT-CO3, encoded in the mitochondrial DNA, and 11 supernumerary subunits COX4I, COX5A, COX5B, COX6A, COX6B, COX6C, COX7A, COX7B, COX7C, COX8 and NDUFA4, which are encoded in the nuclear genome. The complex exists as a monomer or a dimer and forms supercomplexes (SCs) in the inner mitochondrial membrane with NADH-ubiquinone oxidoreductase (complex I, CI) and ubiquinol-cytochrome c oxidoreductase (cytochrome b-c1 complex, complex III, CIII), resulting in different assemblies (supercomplex SCI(1)III(2)IV(1) and megacomplex MCI(2)III(2)IV(2)).

The protein resides in the mitochondrion inner membrane. The catalysed reaction is 4 Fe(II)-[cytochrome c] + O2 + 8 H(+)(in) = 4 Fe(III)-[cytochrome c] + 2 H2O + 4 H(+)(out). Its function is as follows. Component of the cytochrome c oxidase, the last enzyme in the mitochondrial electron transport chain which drives oxidative phosphorylation. The respiratory chain contains 3 multisubunit complexes succinate dehydrogenase (complex II, CII), ubiquinol-cytochrome c oxidoreductase (cytochrome b-c1 complex, complex III, CIII) and cytochrome c oxidase (complex IV, CIV), that cooperate to transfer electrons derived from NADH and succinate to molecular oxygen, creating an electrochemical gradient over the inner membrane that drives transmembrane transport and the ATP synthase. Cytochrome c oxidase is the component of the respiratory chain that catalyzes the reduction of oxygen to water. Electrons originating from reduced cytochrome c in the intermembrane space (IMS) are transferred via the dinuclear copper A center (CU(A)) of subunit 2 and heme A of subunit 1 to the active site in subunit 1, a binuclear center (BNC) formed by heme A3 and copper B (CU(B)). The BNC reduces molecular oxygen to 2 water molecules using 4 electrons from cytochrome c in the IMS and 4 protons from the mitochondrial matrix. This chain is Cytochrome c oxidase subunit 3 (MT-CO3), found in Coturnix japonica (Japanese quail).